Consider the following 632-residue polypeptide: ATP-dependent RNA helicase mrh4, mitochondrial (632 aa).

The N-terminal 37 residues, 1–37 (MNRLGRMSLPLRSPACLICQTRTTTLIPSSWQTARSM), are a transit peptide targeting the mitochondrion. Residues 49–111 (MALSPDVAKP…KEEAQKKESP (63 aa)) are disordered. Positions 97–111 (RSGDSKEEAQKKESP) are enriched in basic and acidic residues. The Q motif signature appears at 141–174 (TSFDQFPLLPVVRNSIVSQALPGLMEVTPTPIQR). The 213-residue stretch at 194–406 (DDDEPHYDQF…RKRYPDIKRL (213 aa)) folds into the Helicase ATP-binding domain. 207–214 (AETGSGKT) contacts ATP. Residues 353-356 (DEAD) carry the DEAD box motif. In terms of domain architecture, Helicase C-terminal spans 460–632 (FLEPKTKKIL…EGMFRGQALI (173 aa)).

It belongs to the DEAD box helicase family. MRH4 subfamily.

It is found in the mitochondrion. It catalyses the reaction ATP + H2O = ADP + phosphate + H(+). ATP-binding RNA helicase involved in mitochondrial RNA metabolism. Required for maintenance of mitochondrial DNA. The chain is ATP-dependent RNA helicase mrh4, mitochondrial (mrh4) from Aspergillus clavatus (strain ATCC 1007 / CBS 513.65 / DSM 816 / NCTC 3887 / NRRL 1 / QM 1276 / 107).